A 313-amino-acid chain; its full sequence is Dehydrogenase/reductase SDR family member 1 (313 aa).

An N-acetylalanine modification is found at A2. I19 is an NAD(+) binding site. R21 bears the Omega-N-methylarginine mark. Residue D64 participates in NAD(+) binding. S151 contributes to the substrate binding site. NAD(+)-binding residues include Y163, K167, and T198. The active-site Proton acceptor is Y163. Positions 235–313 (CVVALATDPN…WIIALYTSKF (79 aa)) are required for ER localization.

Belongs to the short-chain dehydrogenases/reductases (SDR) family. In terms of tissue distribution, detected in heart, liver, adrenal glands, and at low levels in skeletal muscle, kidney, pancreas and brain.

The protein resides in the endoplasmic reticulum. It catalyses the reaction 17alpha-estradiol + NADP(+) = estrone + NADPH + H(+). The catalysed reaction is testosterone + NADP(+) = androst-4-ene-3,17-dione + NADPH + H(+). The enzyme catalyses prostaglandin E1 + NADPH + H(+) = prostaglandin F1 + NADP(+). It carries out the reaction isatin + NADPH + H(+) = 3-hydroxyindolin-2-one + NADP(+). In terms of biological role, NADPH-dependent oxidoreductase which catalyzes the reduction of steroids (estrone, androstene-3,17-dione and cortisone) as well as prostaglandin E1, isatin and xenobiotics in vitro. May have a role in steroid and/or xenobiotic metabolism. This is Dehydrogenase/reductase SDR family member 1 from Homo sapiens (Human).